Here is a 525-residue protein sequence, read N- to C-terminus: MTVNYNLDVSSASIFSFLRLQLRWKGSIWKYLLKELFMFIIAFITVSSVYRSNLIIGEKTRKIWDNFAALFDQNMDFIPLTFMLGFFVTIIVRRWNDIFANLGWVENTAITVANYIRGTDDRTRMIRRNVIRYMVLAQVLVFRDCSIQVRKRFPTMESIVSAGFMLEHEKEALDNVQCGKLQKYFVPIQWSTGLLVDARAEGKIAADLLMNEIGKHIIEFRKMLALLSNYDWVPIPLAYPQVVFLAVRSYFFMALIARQSVLLDGKEPEQPSILYPTVPFVMSILQFIFVVGWMKVAESMINPLGEDDDDFECNYLLDRNLMIGLCIVDDNYNRTPSVEKDAFWCADVEPLYSVETAMIPKNPQIGSAANYDVKVDEEEVMMMPHMDDVDLFDFESTNNLIPRKTFSVISIQRPFGSRASLASRKRSMMFDQLRGRIAKKQHRSNMFQNSVSQASLHYFESQAPSEINLSTLEMTAPKRKSSTGKLGSMNVAEEQHKLSAEVLPIVIEEDEERSKMLEKDKNKNA.

4 helical membrane-spanning segments follow: residues 36–56 (LFMF…NLII), 71–91 (FDQN…VTII), 237–257 (LAYP…ALIA), and 273–293 (ILYP…VVGW).

This sequence belongs to the anion channel-forming bestrophin (TC 1.A.46) family. Calcium-sensitive chloride channel subfamily. Forms oligomers.

The protein resides in the cell membrane. In terms of biological role, forms chloride channels. This Caenorhabditis elegans protein is Bestrophin homolog 15 (best-15).